A 354-amino-acid chain; its full sequence is Stimulator of interferon genes protein 3 (354 aa).

4 helical membrane passes run 20 to 40 (VTFASVVIAIISGALLVFALW), 48 to 68 (INFVFFATALLMLSVIIGELI), 101 to 121 (YGSCILAVGTTSVLFVCYALL), and 132 to 152 (YGIFFILNCFVIPQLVFIVGI). 3',3'-cGAMP-binding residues include Asn-178, Tyr-183, Arg-250, Ile-251, Lys-253, Glu-272, Ser-275, and Asn-276.

It belongs to the STING family.

It is found in the membrane. Facilitator of innate immune signaling that acts as a sensor of second messenger signals produced by cyclic GMP-AMP synthase-like receptors (cGLRs) and promotes the production of type I interferon. Innate immune response is triggered in response to nucleotides from viruses and bacteria delivered to the cytoplasm. Acts by binding cyclic dinucleotides: recognizes and binds cyclic 3'-3' linked cGAMP (3'-3'-cGAMP), cyclic di-AMP (3',3'-c-di-AMP) and cyclic di-GMP (3',3'-c-di-GMP) second messengers produced by cGLRs in response to nucleotides in the cytosol, such as double-stranded RNA (dsRNA). Upon binding to 3'-3'-cGAMP, 3',3'-c-di-AMP or 3',3'-c-di-GMP, oligomerizes and promotes the recruitment and subsequent activation of the transcription factor IRF3 to induce expression of type I interferon. The polypeptide is Stimulator of interferon genes protein 3 (Stylophora pistillata (Smooth cauliflower coral)).